A 435-amino-acid polypeptide reads, in one-letter code: ATP-dependent protease ATPase subunit HslU (435 aa).

ATP is bound by residues isoleucine 18, 60–65, aspartate 248, glutamate 313, and arginine 385; that span reads GVGKTE.

Belongs to the ClpX chaperone family. HslU subfamily. As to quaternary structure, a double ring-shaped homohexamer of HslV is capped on each side by a ring-shaped HslU homohexamer. The assembly of the HslU/HslV complex is dependent on binding of ATP.

It is found in the cytoplasm. Its function is as follows. ATPase subunit of a proteasome-like degradation complex; this subunit has chaperone activity. The binding of ATP and its subsequent hydrolysis by HslU are essential for unfolding of protein substrates subsequently hydrolyzed by HslV. HslU recognizes the N-terminal part of its protein substrates and unfolds these before they are guided to HslV for hydrolysis. This Allorhizobium ampelinum (strain ATCC BAA-846 / DSM 112012 / S4) (Agrobacterium vitis (strain S4)) protein is ATP-dependent protease ATPase subunit HslU.